The primary structure comprises 586 residues: ATPase family AAA domain-containing protein 3A (586 aa).

Disordered stretches follow at residues 1–55 and 111–134; these read MSWL…PTGL and QAEERRKTLSEETRQHQARAQYQD. Residue Ser2 is modified to N-acetylserine. Residues 2 to 50 are required for interaction with the inner surface of the mitochondrial outer membrane; sequence SWLFGINKGPKGEGAGPPPPLPPAQPGAEGGGDRGLGDRPAPKDKWSNF. The Mitochondrial intermembrane segment spans residues 2–246; that stretch reads SWLFGINKGP…FRAFVTDWDK (245 aa). Residues 17–26 show a composition bias toward pro residues; it reads GPPPPLPPAQ. 2 stretches are compositionally biased toward basic and acidic residues: residues 32–48 and 111–125; these read GGDRGLGDRPAPKDKWS and QAEERRKTLSEETRQ. A coiled-coil region spans residues 86–219; that stretch reads QLEQQSKLKE…QIRLKAAEHR (134 aa). A helical transmembrane segment spans residues 247–264; the sequence is VTATVAGLTLLAVGVYSA. The Mitochondrial matrix portion of the chain corresponds to 265–586; sequence KNATLVAGRF…PGRGDEPSPS (322 aa). The segment at 290–305 is S100B-binding; it reads RITVLEALRHPIQVSR. Ser321 is subject to Phosphoserine. Residue 352–359 participates in ATP binding; sequence GPPGTGKT. Residue Lys491 is modified to N6-acetyllysine.

This sequence belongs to the AAA ATPase family. Can form homooligomers. Homodimer formation at the N-terminus may be regulated by ATP and is required for the interaction with the inner surface of the mitochondrial outer membrane and correct mitochondrial homeostasis. Interacts with components of the mitochondrial ribosome and with other proteins involved in mitochondrial RNA metabolism. May also interact with protein involved in lipid metabolism, including STARD9. May interact with FAM210A. Interacts with GADD45GIP1. Interacts with S100B in a Ca(+2)- and Zn(+2)-dependent manner; this interaction probably occurs in the cytosol prior to mitochondrial targeting. S100B could assist ATAD3A cytoplasmic processing, preventing aggregation and favoring mitochondrial localization. Interacts with HSP60/HSPD1. Forms heterooligomers with ATAD3B; this interaction may affect ATAD3A activity. Interacts with CLPB. Interacts with EIF2AK3/PERK; ATAD3A and EIF2S1/eIF-2-alpha occupy a common binding site within the cytoplasmic loop of EIF2AK3/PERK, leading to prevent EIF2AK3/PERK association with its substrate EIF2S1/eIF-2-alpha. In terms of tissue distribution, overexpressed in lung adenocarcinomas (at protein level).

Its subcellular location is the mitochondrion inner membrane. The protein resides in the mitochondrion matrix. The protein localises to the mitochondrion nucleoid. It carries out the reaction ATP + H2O = ADP + phosphate + H(+). Functionally, essential for mitochondrial network organization, mitochondrial metabolism and cell growth at organism and cellular level. May play an important role in mitochondrial protein synthesis. May also participate in mitochondrial DNA replication. May bind to mitochondrial DNA D-loops and contribute to nucleoid stability. Required for enhanced channeling of cholesterol for hormone-dependent steroidogenesis. Involved in mitochondrial-mediated antiviral innate immunity. Required to protect mitochondria from the PERK-mediated unfolded protein response: specifically inhibits the activity of EIF2AK3/PERK at mitochondria-endoplasmic reticulum contact sites, thereby providing a safe haven for mitochondrial protein translation during endoplasmic reticulum stress. Ability to inhibit EIF2AK3/PERK is independent of its ATPase activity. Also involved in the mitochondrial DNA damage response by promoting signaling between damaged genomes and the mitochondrial membrane, leading to activation of the integrated stress response (ISR). This Homo sapiens (Human) protein is ATPase family AAA domain-containing protein 3A.